We begin with the raw amino-acid sequence, 122 residues long: Small ribosomal subunit protein uS13 (122 aa).

The tract at residues 95–122 is disordered; that stretch reads GLPVRGQRTHTNARTRKGPAKSIAGKKK.

It belongs to the universal ribosomal protein uS13 family. As to quaternary structure, part of the 30S ribosomal subunit. Forms a loose heterodimer with protein S19. Forms two bridges to the 50S subunit in the 70S ribosome.

Its function is as follows. Located at the top of the head of the 30S subunit, it contacts several helices of the 16S rRNA. In the 70S ribosome it contacts the 23S rRNA (bridge B1a) and protein L5 of the 50S subunit (bridge B1b), connecting the 2 subunits; these bridges are implicated in subunit movement. Contacts the tRNAs in the A and P-sites. The protein is Small ribosomal subunit protein uS13 of Rhodopseudomonas palustris (strain BisB18).